The sequence spans 304 residues: Polyisoprenyl-teichoic acid--peptidoglycan teichoic acid transferase TagU (304 aa).

Topologically, residues 1–4 (MKKK) are cytoplasmic. Residues 5–25 (ILFWILGIIGILIIGGGAYAY) form a helical; Signal-anchor for type II membrane protein membrane-spanning segment. Over 26–304 (SIYSSVSKTL…KLRAHLEVTK (279 aa)) the chain is Extracellular.

This sequence belongs to the LytR/CpsA/Psr (LCP) family.

The protein localises to the cell membrane. Its pathway is cell wall biogenesis. In terms of biological role, may catalyze the final step in cell wall teichoic acid biosynthesis, the transfer of the anionic cell wall polymers (APs) from their lipid-linked precursor to the cell wall peptidoglycan (PG). The polypeptide is Polyisoprenyl-teichoic acid--peptidoglycan teichoic acid transferase TagU (Bacillus cereus (strain ATCC 14579 / DSM 31 / CCUG 7414 / JCM 2152 / NBRC 15305 / NCIMB 9373 / NCTC 2599 / NRRL B-3711)).